The following is a 505-amino-acid chain: Lysine--tRNA ligase (505 aa).

Mg(2+) is bound by residues glutamate 415 and glutamate 422.

This sequence belongs to the class-II aminoacyl-tRNA synthetase family. In terms of assembly, homodimer. Mg(2+) is required as a cofactor.

It localises to the cytoplasm. It carries out the reaction tRNA(Lys) + L-lysine + ATP = L-lysyl-tRNA(Lys) + AMP + diphosphate. The protein is Lysine--tRNA ligase of Pectobacterium atrosepticum (strain SCRI 1043 / ATCC BAA-672) (Erwinia carotovora subsp. atroseptica).